A 282-amino-acid polypeptide reads, in one-letter code: Bifunctional protein FolD (282 aa).

NADP(+) is bound by residues 165-167 (GRS), S190, and T231.

Belongs to the tetrahydrofolate dehydrogenase/cyclohydrolase family. In terms of assembly, homodimer.

The enzyme catalyses (6R)-5,10-methylene-5,6,7,8-tetrahydrofolate + NADP(+) = (6R)-5,10-methenyltetrahydrofolate + NADPH. The catalysed reaction is (6R)-5,10-methenyltetrahydrofolate + H2O = (6R)-10-formyltetrahydrofolate + H(+). It functions in the pathway one-carbon metabolism; tetrahydrofolate interconversion. Functionally, catalyzes the oxidation of 5,10-methylenetetrahydrofolate to 5,10-methenyltetrahydrofolate and then the hydrolysis of 5,10-methenyltetrahydrofolate to 10-formyltetrahydrofolate. The polypeptide is Bifunctional protein FolD (Clostridium botulinum (strain Eklund 17B / Type B)).